Reading from the N-terminus, the 62-residue chain is Large ribosomal subunit protein uL29 (62 aa).

Belongs to the universal ribosomal protein uL29 family.

The chain is Large ribosomal subunit protein uL29 from Vesicomyosocius okutanii subsp. Calyptogena okutanii (strain HA).